The following is a 244-amino-acid chain: Flavin-dependent thymidylate synthase (244 aa).

One can recognise a ThyX domain in the interval 2–207 (VRVTLVNYTK…DIRPIIKWAK (206 aa)). FAD contacts are provided by residues S56, 80-82 (RHR), and Q88. DUMP-binding positions include 77–80 (QLVR), 88–92 (QQSQR), and R146. The ThyX motif signature appears at 80-90 (RHRIASYTQQS). FAD-binding positions include 162–164 (NLR) and H168. R173 contacts dUMP. R173 (involved in ionization of N3 of dUMP, leading to its activation) is an active-site residue.

It belongs to the thymidylate synthase ThyX family. As to quaternary structure, homotetramer. Requires FAD as cofactor.

It carries out the reaction dUMP + (6R)-5,10-methylene-5,6,7,8-tetrahydrofolate + NADPH + H(+) = dTMP + (6S)-5,6,7,8-tetrahydrofolate + NADP(+). The protein operates within pyrimidine metabolism; dTTP biosynthesis. Its function is as follows. Catalyzes the reductive methylation of 2'-deoxyuridine-5'-monophosphate (dUMP) to 2'-deoxythymidine-5'-monophosphate (dTMP) while utilizing 5,10-methylenetetrahydrofolate (mTHF) as the methyl donor, and NADPH and FADH(2) as the reductant. This is Flavin-dependent thymidylate synthase from Pyrococcus furiosus (strain ATCC 43587 / DSM 3638 / JCM 8422 / Vc1).